We begin with the raw amino-acid sequence, 689 residues long: Glycine--tRNA ligase beta subunit (689 aa).

It belongs to the class-II aminoacyl-tRNA synthetase family. Tetramer of two alpha and two beta subunits.

The protein localises to the cytoplasm. It catalyses the reaction tRNA(Gly) + glycine + ATP = glycyl-tRNA(Gly) + AMP + diphosphate. This is Glycine--tRNA ligase beta subunit from Dictyoglomus thermophilum (strain ATCC 35947 / DSM 3960 / H-6-12).